A 126-amino-acid polypeptide reads, in one-letter code: Plastocyanin (126 aa).

A signal peptide spans 1–28 (MSKKFLTILAGLLLVVSSFFLSVSPAAA). The Plastocyanin-like domain occupies 29 to 126 (ANATVKMGSD…AGMVGKVVVE (98 aa)). The Cu cation site is built by histidine 67, cysteine 111, histidine 114, and methionine 119.

This sequence belongs to the plastocyanin family. Requires Cu(2+) as cofactor.

Its subcellular location is the cellular thylakoid membrane. In terms of biological role, participates in electron transfer between P700 and the cytochrome b6-f complex in photosystem I. This is Plastocyanin (petE) from Synechocystis sp. (strain ATCC 27184 / PCC 6803 / Kazusa).